Reading from the N-terminus, the 687-residue chain is Cytochrome b/c1 (687 aa).

A helical membrane pass occupies residues 46 to 66 (FGAILSFMLGMQILTGVILAM). 2 residues coordinate heme b: His96 and His110. The next 2 helical transmembrane spans lie at 126 to 146 (VLWI…FMGY) and 160 to 180 (VITN…TLLW). Heme b-binding residues include His197 and His211. 6 consecutive transmembrane segments (helical) span residues 199 to 219 (LLPF…HVAG), 247 to 267 (FGVA…PNYL), 305 to 325 (LAGV…PWLD), 337 to 357 (LAKQ…YLGA), 363 to 383 (IYVI…LIVL), and 410 to 430 (AVAS…GSLQ). The interval 404-434 (LAKGGKAVASVAIALVAAGALFLGSLQDARA) is internal signal sequence. One can recognise a Cytochrome c domain in the interval 458 to 643 (GALQRGLKVY…TVAQYSKDVT (186 aa)). The heme c site is built by Cys471, Cys474, His475, and Met616. The helical transmembrane segment at 666 to 678 (VFLIIFAGLMYFT) threads the bilayer.

Belongs to the cytochrome b family. In terms of assembly, the main subunits of complex b-c1 are: cytochrome b, cytochrome c1 and the Rieske protein. It depends on heme b as a cofactor. Requires heme c as cofactor. The protein is post-translationally processed into cytochrome b and c1. This occurs by processing between residues 434 and 435 without processing between cytochrome b and the N-terminal of the putative signal sequence domain.

Its subcellular location is the cell inner membrane. Its function is as follows. Component of the ubiquinol-cytochrome c reductase complex (complex III or cytochrome b-c1 complex), which is a respiratory chain that generates an electrochemical potential coupled to ATP synthesis. c1 functions as an electron donor to cytochrome c. This is Cytochrome b/c1 (fbcH) from Bradyrhizobium diazoefficiens (strain JCM 10833 / BCRC 13528 / IAM 13628 / NBRC 14792 / USDA 110).